The chain runs to 443 residues: 3-isopropylmalate dehydratase large subunit (443 aa).

Positions 347, 407, and 410 each coordinate [4Fe-4S] cluster.

Belongs to the aconitase/IPM isomerase family. LeuC type 1 subfamily. In terms of assembly, heterodimer of LeuC and LeuD. Requires [4Fe-4S] cluster as cofactor.

The enzyme catalyses (2R,3S)-3-isopropylmalate = (2S)-2-isopropylmalate. It participates in amino-acid biosynthesis; L-leucine biosynthesis; L-leucine from 3-methyl-2-oxobutanoate: step 2/4. Its function is as follows. Catalyzes the isomerization between 2-isopropylmalate and 3-isopropylmalate, via the formation of 2-isopropylmaleate. This Buchnera aphidicola subsp. Uroleucon aeneum protein is 3-isopropylmalate dehydratase large subunit.